A 346-amino-acid chain; its full sequence is Methylthioribose-1-phosphate isomerase (346 aa).

Residues 54 to 56 (RGA), R91, and Q192 each bind substrate. D233 acts as the Proton donor in catalysis. 243–244 (NK) serves as a coordination point for substrate.

It belongs to the eIF-2B alpha/beta/delta subunits family. MtnA subfamily.

The catalysed reaction is 5-(methylsulfanyl)-alpha-D-ribose 1-phosphate = 5-(methylsulfanyl)-D-ribulose 1-phosphate. The protein operates within amino-acid biosynthesis; L-methionine biosynthesis via salvage pathway; L-methionine from S-methyl-5-thio-alpha-D-ribose 1-phosphate: step 1/6. Catalyzes the interconversion of methylthioribose-1-phosphate (MTR-1-P) into methylthioribulose-1-phosphate (MTRu-1-P). The chain is Methylthioribose-1-phosphate isomerase from Yersinia pseudotuberculosis serotype O:1b (strain IP 31758).